Consider the following 349-residue polypeptide: tRNA pseudouridine synthase D (349 aa).

Residue F27 participates in substrate binding. The active-site Nucleophile is D80. Residue N129 participates in substrate binding. The TRUD domain occupies 155-303; sequence GVPNYFGAQR…VEAARRAMLL (149 aa). F329 provides a ligand contact to substrate.

The protein belongs to the pseudouridine synthase TruD family.

The catalysed reaction is uridine(13) in tRNA = pseudouridine(13) in tRNA. Its function is as follows. Responsible for synthesis of pseudouridine from uracil-13 in transfer RNAs. The sequence is that of tRNA pseudouridine synthase D from Klebsiella pneumoniae (strain 342).